A 509-amino-acid polypeptide reads, in one-letter code: Inositol-3-phosphate synthase 1 (509 aa).

It belongs to the myo-inositol 1-phosphate synthase family. The cofactor is NAD(+). As to expression, highly expressed in anthers, but transcripts are undetectable in roots, leaves, flowers and embryos.

The protein localises to the cytoplasm. The catalysed reaction is D-glucose 6-phosphate = 1D-myo-inositol 3-phosphate. The protein operates within polyol metabolism; myo-inositol biosynthesis; myo-inositol from D-glucose 6-phosphate: step 1/2. Key enzyme in myo-inositol biosynthesis pathway that catalyzes the conversion of glucose 6-phosphate to 1-myo-inositol 1-phosphate in a NAD-dependent manner. Is a key enzyme in the phytic acid biosynthesis pathway in seeds. The protein is Inositol-3-phosphate synthase 1 of Oryza sativa subsp. japonica (Rice).